Consider the following 534-residue polypeptide: NEDD8-activating enzyme E1 regulatory subunit (534 aa).

A2 is subject to N-acetylalanine. An N6-acetyllysine mark is found at K6 and K341. Residues 331-344 form an interaction with UBA3 region; that stretch reads DMIADSGKYIKLQN.

Belongs to the ubiquitin-activating E1 family. ULA1 subfamily. As to quaternary structure, heterodimer of UBA3 and NAE1. The complex binds NEDD8 and UBE2M. Binds APP and TP53BP2. In terms of processing, ubiquitinated by TRIP12, leading to its degradation by the proteasome. As to expression, ubiquitous in fetal tissues. Expressed throughout the adult brain.

It is found in the cell membrane. The protein operates within protein modification; protein neddylation. With respect to regulation, binding of TP53BP2 to the regulatory subunit NAE1 decreases neddylation activity. Functionally, regulatory subunit of the dimeric UBA3-NAE1 E1 enzyme. E1 activates NEDD8 by first adenylating its C-terminal glycine residue with ATP, thereafter linking this residue to the side chain of the catalytic cysteine, yielding a NEDD8-UBA3 thioester and free AMP. E1 finally transfers NEDD8 to the catalytic cysteine of UBE2M. Necessary for cell cycle progression through the S-M checkpoint. Overexpression of NAE1 causes apoptosis through deregulation of NEDD8 conjugation. The covalent attachment of NEDD8 to target proteins is known as 'neddylation' and the process is involved in the regulation of cell growth, viability and development. The sequence is that of NEDD8-activating enzyme E1 regulatory subunit (NAE1) from Homo sapiens (Human).